The sequence spans 99 residues: Large ribosomal subunit protein bL28 (99 aa).

Belongs to the bacterial ribosomal protein bL28 family.

This is Large ribosomal subunit protein bL28 from Brucella anthropi (strain ATCC 49188 / DSM 6882 / CCUG 24695 / JCM 21032 / LMG 3331 / NBRC 15819 / NCTC 12168 / Alc 37) (Ochrobactrum anthropi).